The primary structure comprises 269 residues: 4-hydroxy-tetrahydrodipicolinate reductase (269 aa).

NAD(+) contacts are provided by residues 11–16 and E37; that span reads GASGRM. R38 is an NADP(+) binding site. NAD(+) is bound by residues 101–103 and 125–128; these read GTT and AGNM. H158 serves as the catalytic Proton donor/acceptor. H159 is a (S)-2,3,4,5-tetrahydrodipicolinate binding site. The active-site Proton donor is the K162. 168–169 is a binding site for (S)-2,3,4,5-tetrahydrodipicolinate; the sequence is GT.

The protein belongs to the DapB family.

The protein resides in the cytoplasm. It carries out the reaction (S)-2,3,4,5-tetrahydrodipicolinate + NAD(+) + H2O = (2S,4S)-4-hydroxy-2,3,4,5-tetrahydrodipicolinate + NADH + H(+). It catalyses the reaction (S)-2,3,4,5-tetrahydrodipicolinate + NADP(+) + H2O = (2S,4S)-4-hydroxy-2,3,4,5-tetrahydrodipicolinate + NADPH + H(+). It participates in amino-acid biosynthesis; L-lysine biosynthesis via DAP pathway; (S)-tetrahydrodipicolinate from L-aspartate: step 4/4. In terms of biological role, catalyzes the conversion of 4-hydroxy-tetrahydrodipicolinate (HTPA) to tetrahydrodipicolinate. The sequence is that of 4-hydroxy-tetrahydrodipicolinate reductase from Ruegeria pomeroyi (strain ATCC 700808 / DSM 15171 / DSS-3) (Silicibacter pomeroyi).